A 734-amino-acid chain; its full sequence is Ribosome-releasing factor 2, mitochondrial (734 aa).

A mitochondrion-targeting transit peptide spans 1-25; the sequence is MLQYCLLRRYRFLLRQHAQVIKRCY. The 277-residue stretch at 27-303 folds into the tr-type G domain; sequence GDIRNIGILA…AVNAYLPMPE (277 aa). GTP is bound by residues 36–43, 100–104, and 154–157; these read AHIDAGKT, DTPGH, and NKMD.

The protein belongs to the TRAFAC class translation factor GTPase superfamily. Classic translation factor GTPase family. EF-G/EF-2 subfamily.

The protein localises to the mitochondrion. In terms of biological role, mitochondrial GTPase that mediates the disassembly of ribosomes from messenger RNA at the termination of mitochondrial protein biosynthesis. Not involved in the GTP-dependent ribosomal translocation step during translation elongation. This chain is Ribosome-releasing factor 2, mitochondrial, found in Drosophila grimshawi (Hawaiian fruit fly).